A 225-amino-acid polypeptide reads, in one-letter code: Thaumatin-like protein (225 aa).

An N-terminal signal peptide occupies residues 1-24; that stretch reads MSTFKSLSLSALLFIAFLFTCARG. 8 disulfides stabilise this stretch: cysteine 33-cysteine 224, cysteine 74-cysteine 84, cysteine 89-cysteine 95, cysteine 140-cysteine 213, cysteine 146-cysteine 196, cysteine 154-cysteine 164, cysteine 168-cysteine 177, and cysteine 178-cysteine 183.

It belongs to the thaumatin family. Post-translationally, N-glycosylated.

It is found in the secreted. Its function is as follows. Has antifungal activity against B.cinerea, C.comatus, M.arachidicola, P.piricola, C.albicans and S.carlsbergensis. Inhibits HIV-1 reverse transcriptase. In Actinidia chinensis var. chinensis (Chinese soft-hair kiwi), this protein is Thaumatin-like protein.